The chain runs to 505 residues: Histidine ammonia-lyase (505 aa).

The segment at residues 141-143 (ASG) is a cross-link (5-imidazolinone (Ala-Gly)). Ser142 is subject to 2,3-didehydroalanine (Ser).

Belongs to the PAL/histidase family. Contains an active site 4-methylidene-imidazol-5-one (MIO), which is formed autocatalytically by cyclization and dehydration of residues Ala-Ser-Gly.

It localises to the cytoplasm. It carries out the reaction L-histidine = trans-urocanate + NH4(+). It participates in amino-acid degradation; L-histidine degradation into L-glutamate; N-formimidoyl-L-glutamate from L-histidine: step 1/3. This Bacillus cereus (strain G9842) protein is Histidine ammonia-lyase.